A 202-amino-acid chain; its full sequence is Large ribosomal subunit protein uL4 (202 aa).

Residues 42–52 show a composition bias toward polar residues; the sequence is GTKAQKSRSQV. Residues 42–70 form a disordered region; it reads GTKAQKSRSQVSGTTKKSKKQKGGGARHG.

Belongs to the universal ribosomal protein uL4 family. As to quaternary structure, part of the 50S ribosomal subunit.

Functionally, one of the primary rRNA binding proteins, this protein initially binds near the 5'-end of the 23S rRNA. It is important during the early stages of 50S assembly. It makes multiple contacts with different domains of the 23S rRNA in the assembled 50S subunit and ribosome. Its function is as follows. Forms part of the polypeptide exit tunnel. This chain is Large ribosomal subunit protein uL4, found in Xylella fastidiosa (strain 9a5c).